The following is a 344-amino-acid chain: Phosphoribosylformylglycinamidine cyclo-ligase (344 aa).

It belongs to the AIR synthase family.

The protein localises to the cytoplasm. It catalyses the reaction 2-formamido-N(1)-(5-O-phospho-beta-D-ribosyl)acetamidine + ATP = 5-amino-1-(5-phospho-beta-D-ribosyl)imidazole + ADP + phosphate + H(+). It participates in purine metabolism; IMP biosynthesis via de novo pathway; 5-amino-1-(5-phospho-D-ribosyl)imidazole from N(2)-formyl-N(1)-(5-phospho-D-ribosyl)glycinamide: step 2/2. The polypeptide is Phosphoribosylformylglycinamidine cyclo-ligase (Haemophilus influenzae (strain PittGG)).